A 329-amino-acid polypeptide reads, in one-letter code: Phosphate acyltransferase (329 aa).

The protein belongs to the PlsX family. As to quaternary structure, homodimer. Probably interacts with PlsY.

It is found in the cytoplasm. The enzyme catalyses a fatty acyl-[ACP] + phosphate = an acyl phosphate + holo-[ACP]. It functions in the pathway lipid metabolism; phospholipid metabolism. In terms of biological role, catalyzes the reversible formation of acyl-phosphate (acyl-PO(4)) from acyl-[acyl-carrier-protein] (acyl-ACP). This enzyme utilizes acyl-ACP as fatty acyl donor, but not acyl-CoA. The chain is Phosphate acyltransferase from Anoxybacillus flavithermus (strain DSM 21510 / WK1).